A 151-amino-acid polypeptide reads, in one-letter code: MKLSKFLESQGTYVGIKLDEASKQELVRLQKTLRLKNPLDPDKFHVTVLYSRKQIDVPVVDTTFVATVEQVDCWKTQDGKHAVVAKMSCPALVERHEDLISIGGTHDYPDYTPHVTLSYDDVITPMFINTEVRLVDEYIEPLDLEWVANND.

Tyr13 is a binding site for 3',3'-cGAMP. 3',3'-cUAMP is bound at residue Tyr13. Active-site residues include His45 and Thr47. 3',3'-cGAMP is bound at residue Tyr108. Tyr108 is a 3',3'-cUAMP binding site. Active-site residues include His114 and Thr116. Glu140 and Trp146 together coordinate 3',3'-cGAMP. Residues Glu140 and Trp146 each coordinate 3',3'-cUAMP.

Belongs to the anti-CBASS protein Acb1 family.

The catalysed reaction is 3',3'-cUAMP + H2O = U[3'-5']pAp[3'] + H(+). It carries out the reaction 3',3',3'-c-tri-AMP + H2O = A[3'-5']pA[3'-5']pAp[3'] + H(+). It catalyses the reaction 3',3',3'-cAAG + H2O = G[3'-5']pA[3'-5']pAp[3'] + H(+). The enzyme catalyses 3',3',3'-cAAG + H2O = A[3'-5']pG[3'-5']pAp[3'] + H(+). The catalysed reaction is 3',3'-cGAMP + H2O = G[3'-5']pAp[3'] + H(+). Counteracts the host CBASS antiviral defense system. Phosphodiesterase that enables metal-independent hydrolysis of the host cyclic di- and trinucleotide CBASS signals such as 3'3'-cGAMP, 3'3'cUA, and 3'3'3'-cAAA. Does not cleave cGG or cA4. Besides evasion of the CBASS system, might also enable evasion of the type III CRISPR systems that use cA3 signals. The sequence is that of Anti-CBASS protein Acb1 from Vibrio phage KVP40 (isolate Vibrio parahaemolyticus/Japan/Matsuzaki/1991) (KVP40).